The sequence spans 122 residues: Hydrogenase maturation factor HypA (122 aa).

Histidine 2 provides a ligand contact to Ni(2+). Residues cysteine 73, cysteine 75, cysteine 95, and cysteine 98 each contribute to the Zn(2+) site.

It belongs to the HypA/HybF family.

Involved in the maturation of [NiFe] hydrogenases. Required for nickel insertion into the metal center of the hydrogenase. The polypeptide is Hydrogenase maturation factor HypA (Methanothermobacter thermautotrophicus (strain ATCC 29096 / DSM 1053 / JCM 10044 / NBRC 100330 / Delta H) (Methanobacterium thermoautotrophicum)).